Here is a 614-residue protein sequence, read N- to C-terminus: Acetylcholinesterase (614 aa).

The first 31 residues, 1-31, serve as a signal peptide directing secretion; sequence MRPPWYPLHTPSLAFPLLFLLLSLLGGGARA. Cysteines 100 and 127 form a disulfide. Residue S234 is the Acyl-ester intermediate of the active site. A disulfide bridge connects residues C288 and C303. N296 is a glycosylation site (N-linked (GlcNAc...) asparagine). E365 acts as the Charge relay system in catalysis. N381 carries an N-linked (GlcNAc...) asparagine glycan. A disulfide bridge links C440 with C560. H478 functions as the Charge relay system in the catalytic mechanism. The N-linked (GlcNAc...) asparagine glycan is linked to N495.

It belongs to the type-B carboxylesterase/lipase family. As to quaternary structure, isoform H generates GPI-anchored dimers; disulfide linked. Isoform T generates multiple structures, ranging from monomers and dimers to collagen-tailed and hydrophobic-tailed forms, in which catalytic tetramers are associated with anchoring proteins that attach them to the basal lamina or to cell membranes. In the collagen-tailed forms, isoform T subunits are associated with a specific collagen, COLQ, which triggers the formation of isoform T tetramers, from monomers and dimers. Interacts with PRIMA1. The interaction with PRIMA1 is required to anchor it to the basal lamina of cells and organize into tetramers. Predominates in most expressing tissues except erythrocytes where a glycophospholipid-attached form of ACHE predominates.

It is found in the synapse. The protein localises to the secreted. Its subcellular location is the cell membrane. It catalyses the reaction acetylcholine + H2O = choline + acetate + H(+). Its function is as follows. Terminates signal transduction at the neuromuscular junction by rapid hydrolysis of the acetylcholine released into the synaptic cleft. The sequence is that of Acetylcholinesterase (Ache) from Mus musculus (Mouse).